The chain runs to 622 residues: Palmitoyltransferase ZDHHC13 (622 aa).

Position 1 is an N-acetylmethionine (Met1). Residues 1–291 (MEGPGLGSQC…RLWRWLQKCE (291 aa)) lie on the Cytoplasmic side of the membrane. ANK repeat units lie at residues 43 to 78 (PLIE…VRQP), 81 to 110 (ENVS…VVDQ), 115 to 144 (LNST…DPTL), 148 to 177 (EGFS…SVNM), 181 to 211 (NGQT…SLNV), 216 to 245 (HQNT…SLDI), and 249 to 277 (KGET…KMRA). The chain crosses the membrane as a helical span at residues 292-312 (LFLLLMLSVITMWAIGYILDF). At 313-320 (NSDSWLLK) the chain is on the lumenal side. The chain crosses the membrane as a helical span at residues 321–341 (GCLLVTLFFLTSLFPRFLVGY). The Cytoplasmic portion of the chain corresponds to 342–347 (KNLVYL). A helical membrane pass occupies residues 348 to 368 (PTAFLLSSVFWIFMTWFILFF). Over 369-370 (PD) the chain is Lumenal. Residues 371 to 391 (LAGAPFYFSFIFSIVAFLYFF) traverse the membrane as a helical segment. The Cytoplasmic segment spans residues 392 to 470 (YKTWATDPGF…RCIGFGNHHY (79 aa)). One can recognise a DHHC domain in the interval 426–476 (TFCTSCLIRKPLRSLHCHVCNCCVARYDQHCLWTGRCIGFGNHHYYIFFLF). Cys456 functions as the S-palmitoyl cysteine intermediate in the catalytic mechanism. A helical transmembrane segment spans residues 471–491 (YIFFLFFLSMVCGWIIYGSFI). At 492–518 (YLSSHCATTFKEDGLWTYLNQIVACSP) the chain is on the lumenal side. A helical membrane pass occupies residues 519-539 (WVLYILMLATFHFSWSTFLLL). The Cytoplasmic segment spans residues 540–622 (NQLFQIAFLG…PAREKVLRSV (83 aa)).

Belongs to the DHHC palmitoyltransferase family. AKR/ZDHHC17 subfamily. As to quaternary structure, interacts (via ANK repeats) with CLIP3. Interacts (via ANK repeats) with DNAJC5 (via C-terminus). Interacts (via ANK repeats) with HTT. Interacts (via ANK repeats) with MAP6. Interacts (via ANK repeats) with SNAP23. Interacts (via ANK repeats) with SNAP25. May interact (via ANK repeats) with SPRED2.

It is found in the golgi apparatus membrane. Its subcellular location is the cytoplasmic vesicle membrane. It carries out the reaction L-cysteinyl-[protein] + hexadecanoyl-CoA = S-hexadecanoyl-L-cysteinyl-[protein] + CoA. Its function is as follows. Palmitoyltransferase that could catalyze the addition of palmitate onto various protein substrates. Palmitoyltransferase for HTT and GAD2. May play a role in Mg(2+) transport. This Homo sapiens (Human) protein is Palmitoyltransferase ZDHHC13.